Here is a 205-residue protein sequence, read N- to C-terminus: Holliday junction branch migration complex subunit RuvA (205 aa).

The segment at 1–64 (MIGRLRGLLV…EDAQLLYGFI (64 aa)) is domain I. The interval 65–143 (TKQERALFRL…SLMEASHGNE (79 aa)) is domain II. The tract at residues 144–156 (REFVLQSNYTPAP) is flexible linker. Residues 157–205 (VVNTAEEDAISALLALGYKPAQASKAVSSVFEEGMDSETLIKASLKSML) are domain III.

The protein belongs to the RuvA family. As to quaternary structure, homotetramer. Forms an RuvA(8)-RuvB(12)-Holliday junction (HJ) complex. HJ DNA is sandwiched between 2 RuvA tetramers; dsDNA enters through RuvA and exits via RuvB. An RuvB hexamer assembles on each DNA strand where it exits the tetramer. Each RuvB hexamer is contacted by two RuvA subunits (via domain III) on 2 adjacent RuvB subunits; this complex drives branch migration. In the full resolvosome a probable DNA-RuvA(4)-RuvB(12)-RuvC(2) complex forms which resolves the HJ.

Its subcellular location is the cytoplasm. Its function is as follows. The RuvA-RuvB-RuvC complex processes Holliday junction (HJ) DNA during genetic recombination and DNA repair, while the RuvA-RuvB complex plays an important role in the rescue of blocked DNA replication forks via replication fork reversal (RFR). RuvA specifically binds to HJ cruciform DNA, conferring on it an open structure. The RuvB hexamer acts as an ATP-dependent pump, pulling dsDNA into and through the RuvAB complex. HJ branch migration allows RuvC to scan DNA until it finds its consensus sequence, where it cleaves and resolves the cruciform DNA. In Shewanella loihica (strain ATCC BAA-1088 / PV-4), this protein is Holliday junction branch migration complex subunit RuvA.